The primary structure comprises 533 residues: Glucose-6-phosphate exchanger SLC37A1 (533 aa).

Residues 18 to 38 (QWYRAFIFILTFLLYASFHLS) traverse the membrane as a helical segment. N-linked (GlcNAc...) asparagine glycosylation occurs at Asn81. 4 consecutive transmembrane segments (helical) span residues 100-120 (GALD…SGII), 129-149 (YLTF…LGYF), 157-177 (FYVV…PSVV), and 222-242 (SFVV…LFLI). A glycan (N-linked (GlcNAc...) asparagine) is linked at Asn263. A run of 7 helical transmembrane segments spans residues 304–324 (VVIL…TGAL), 334–354 (LCLL…PLYI), 366–386 (GELS…AGVI), 394–414 (ASTC…FSTV), 423–443 (IAML…ITTA), 466–486 (AIID…AGLL), and 490–510 (GWSN…LFLI).

This sequence belongs to the major facilitator superfamily. Organophosphate:Pi antiporter (OPA) (TC 2.A.1.4) family. In terms of tissue distribution, expressed in numerous tissues, with highest expression in pancreas, kidney, bone marrow, spleen, liver, small intestine, as well as in fetal brain, liver and spleen.

It is found in the endoplasmic reticulum membrane. It carries out the reaction D-glucose 6-phosphate(in) + phosphate(out) = D-glucose 6-phosphate(out) + phosphate(in). With respect to regulation, inhibited by vanadate but not by chlorogenic acid. Functionally, inorganic phosphate and glucose-6-phosphate antiporter. May transport cytoplasmic glucose-6-phosphate into the lumen of the endoplasmic reticulum and translocate inorganic phosphate into the opposite direction. Independent of a lumenal glucose-6-phosphatase. May not play a role in homeostatic regulation of blood glucose levels. This is Glucose-6-phosphate exchanger SLC37A1 from Homo sapiens (Human).